A 640-amino-acid polypeptide reads, in one-letter code: Chaperone protein DnaK (640 aa).

Thr196 is modified (phosphothreonine; by autocatalysis). Positions 547–569 are enriched in basic and acidic residues; the sequence is GDKIPSDKRPALEGALEKLKDAT. 2 disordered regions span residues 547-575 and 595-640; these read GDKI…GTTE and LYQA…GNGK. Polar residues predominate over residues 603–615; it reads TNASEPTQNTDGS. Residues 625–634 show a composition bias toward acidic residues; it reads GEVENAEFEV.

The protein belongs to the heat shock protein 70 family.

In terms of biological role, acts as a chaperone. This is Chaperone protein DnaK from Chlorobium phaeobacteroides (strain DSM 266 / SMG 266 / 2430).